The primary structure comprises 567 residues: MKISRQAYADMYGPTTGDRIRLGDTELWVEIEHDHTHYGEEVKFGGGKVIRDGMGQSQRCDDAVMDTVITNAVIIDWWGIIKADVGLKNGRIAAIGKSGNPDTQPDIDIIIGPGTEIIAGEGQILTAGGVDTHVHYICPQQVDEALMSGLTTMIGGGTGPATGSVATTHTPGPWHLGKMMQAVDDLPINIGFLGKGSASTPEALEQQIKAGAMSLKIHEDWGAAPASISNALDVADRYDIQVAIHADSLNESGFVQDTLEAFKDRCIHTYHTEGAGGGHAPDIIVACAMPNVLPSSTNPTRPYTINTVDEHLDMLMGCHHLDPNIPEDVAFADSRIRRETIAAEDILHDMGVISMMSSDSQAMGRIGEVVCRTWQTAHKMRVQRGLLPEDEALGADNFRAKRYIAKYTINPAITHGISHEVGSIEVGKFADLVLWKPPFFGVKPSIILKGGMIAGAAMGDPNAAISTPQPVHYRRMFGALGKAVSATRMTFVSQAAMNTGLEEKLGLKSQLVACKNVRQVRKCDMKLNDACPVLTVDPQTYEVHADGVLLTCEPATELPLAQRYHLF.

One can recognise a Urease domain in the interval 128–567 (GGVDTHVHYI…LPLAQRYHLF (440 aa)). 3 residues coordinate Ni(2+): histidine 133, histidine 135, and lysine 216. Lysine 216 is subject to N6-carboxylysine. Histidine 218 is a substrate binding site. Histidine 245 and histidine 271 together coordinate Ni(2+). Histidine 319 serves as the catalytic Proton donor. Aspartate 359 contributes to the Ni(2+) binding site.

Belongs to the metallo-dependent hydrolases superfamily. Urease alpha subunit family. As to quaternary structure, heterotrimer of UreA (gamma), UreB (beta) and UreC (alpha) subunits. Three heterotrimers associate to form the active enzyme. The cofactor is Ni cation. Post-translationally, carboxylation allows a single lysine to coordinate two nickel ions.

It is found in the cytoplasm. It carries out the reaction urea + 2 H2O + H(+) = hydrogencarbonate + 2 NH4(+). It functions in the pathway nitrogen metabolism; urea degradation; CO(2) and NH(3) from urea (urease route): step 1/1. This chain is Urease subunit alpha, found in Pseudoalteromonas translucida (strain TAC 125).